An 81-amino-acid polypeptide reads, in one-letter code: Centromere protein X (81 aa).

An N-acetylmethionine modification is found at methionine 1.

Belongs to the CENP-X/MHF2 family. Heterodimer with CENPX, sometimes called MHF; this interaction stabilizes both partners. MHF heterodimers can assemble to form tetrameric structures. MHF also coassemble with CENPT-CENPW heterodimers at centromeres to form the tetrameric CENP-T-W-S-X complex. Forms a discrete complex with FANCM and CENPX, called FANCM-MHF; this interaction, probably mediated by direct binding between CENPS and FANCM, leads to synergistic activation of double-stranded DNA binding and strongly stimulates FANCM-mediated DNA remodeling. Recruited by FANCM to the Fanconi anemia (FA) core complex, which consists of CENPS, CENPX, FANCA, FANCB, FANCC, FANCE, FANCF, FANCG, FANCL, FANCM, FAAP24 and FAAP100. The FA core complex associates with Bloom syndrome (BLM) complex, which consists of at least BLM, DNA topoisomerase 3-alpha (TOP3A), RMI1/BLAP75, RPA1/RPA70 and RPA2/RPA32. The super complex between FA and BLM is called BRAFT.

The protein localises to the nucleus. It is found in the chromosome. It localises to the centromere. Its subcellular location is the kinetochore. DNA-binding component of the Fanconi anemia (FA) core complex. Required for the normal activation of the FA pathway, leading to monoubiquitination of the FANCI-FANCD2 complex in response to DNA damage, cellular resistance to DNA cross-linking drugs, and prevention of chromosomal breakage. In complex with CENPS (MHF heterodimer), crucial cofactor for FANCM in both binding and ATP-dependent remodeling of DNA. Stabilizes FANCM. In complex with CENPS and FANCM (but not other FANC proteins), rapidly recruited to blocked forks and promotes gene conversion at blocked replication forks. In complex with CENPS, CENPT and CENPW (CENP-T-W-S-X heterotetramer), involved in the formation of a functional kinetochore outer plate, which is essential for kinetochore-microtubule attachment and faithful mitotic progression. As a component of MHF and CENP-T-W-S-X complexes, binds DNA and bends it to form a nucleosome-like structure. DNA-binding function is fulfilled in the presence of CENPS, with the following preference for DNA substates: Holliday junction &gt; double-stranded &gt; splay arm &gt; single-stranded. Does not bind DNA on its own. The sequence is that of Centromere protein X (CENPX) from Homo sapiens (Human).